A 433-amino-acid chain; its full sequence is Serine hydroxymethyltransferase (433 aa).

Residues leucine 131 and glycine 135–leucine 137 each bind (6S)-5,6,7,8-tetrahydrofolate. Position 240 is an N6-(pyridoxal phosphate)lysine (lysine 240).

It belongs to the SHMT family. Homodimer. The cofactor is pyridoxal 5'-phosphate.

The protein resides in the cytoplasm. The enzyme catalyses (6R)-5,10-methylene-5,6,7,8-tetrahydrofolate + glycine + H2O = (6S)-5,6,7,8-tetrahydrofolate + L-serine. The protein operates within one-carbon metabolism; tetrahydrofolate interconversion. It functions in the pathway amino-acid biosynthesis; glycine biosynthesis; glycine from L-serine: step 1/1. Catalyzes the reversible interconversion of serine and glycine with tetrahydrofolate (THF) serving as the one-carbon carrier. This reaction serves as the major source of one-carbon groups required for the biosynthesis of purines, thymidylate, methionine, and other important biomolecules. Also exhibits THF-independent aldolase activity toward beta-hydroxyamino acids, producing glycine and aldehydes, via a retro-aldol mechanism. The sequence is that of Serine hydroxymethyltransferase from Bifidobacterium adolescentis (strain ATCC 15703 / DSM 20083 / NCTC 11814 / E194a).